A 130-amino-acid chain; its full sequence is Peptide methionine sulfoxide reductase MsrB (130 aa).

Residues 1 to 122 enclose the MsrB domain; the sequence is MKKREDMTEM…NSVSMAFEDS (122 aa). Residues Cys39, Cys42, Cys88, and Cys91 each contribute to the Zn(2+) site. Cys111 acts as the Nucleophile in catalysis.

Belongs to the MsrB Met sulfoxide reductase family. Zn(2+) is required as a cofactor.

It carries out the reaction L-methionyl-[protein] + [thioredoxin]-disulfide + H2O = L-methionyl-(R)-S-oxide-[protein] + [thioredoxin]-dithiol. The protein is Peptide methionine sulfoxide reductase MsrB of Pasteurella multocida (strain Pm70).